Consider the following 388-residue polypeptide: Succinate--CoA ligase [ADP-forming] subunit beta (388 aa).

An ATP-grasp domain is found at 9–244; that stretch reads KQLFARYGLP…QSQEDPREAQ (236 aa). Residues Lys-46, 53 to 55, Glu-99, Thr-102, and Glu-107 each bind ATP; that span reads GRG. Positions 199 and 213 each coordinate Mg(2+). Substrate is bound by residues Asn-264 and 321–323; that span reads GIV.

The protein belongs to the succinate/malate CoA ligase beta subunit family. Heterotetramer of two alpha and two beta subunits. Requires Mg(2+) as cofactor.

The catalysed reaction is succinate + ATP + CoA = succinyl-CoA + ADP + phosphate. It catalyses the reaction GTP + succinate + CoA = succinyl-CoA + GDP + phosphate. Its pathway is carbohydrate metabolism; tricarboxylic acid cycle; succinate from succinyl-CoA (ligase route): step 1/1. In terms of biological role, succinyl-CoA synthetase functions in the citric acid cycle (TCA), coupling the hydrolysis of succinyl-CoA to the synthesis of either ATP or GTP and thus represents the only step of substrate-level phosphorylation in the TCA. The beta subunit provides nucleotide specificity of the enzyme and binds the substrate succinate, while the binding sites for coenzyme A and phosphate are found in the alpha subunit. In Enterobacter sp. (strain 638), this protein is Succinate--CoA ligase [ADP-forming] subunit beta.